A 101-amino-acid chain; its full sequence is Small ribosomal subunit protein uS10 (101 aa).

The protein belongs to the universal ribosomal protein uS10 family. As to quaternary structure, part of the 30S ribosomal subunit.

Its function is as follows. Involved in the binding of tRNA to the ribosomes. This is Small ribosomal subunit protein uS10 from Methanocaldococcus jannaschii (strain ATCC 43067 / DSM 2661 / JAL-1 / JCM 10045 / NBRC 100440) (Methanococcus jannaschii).